The sequence spans 207 residues: Protein FAM177A1 (207 aa).

Residue M1 is modified to N-acetylmethionine. The residue at position 65 (S65) is a Phosphoserine. Residue T66 is modified to Phosphothreonine. Residues I131–Q170 adopt a coiled-coil conformation. The interval E142–T176 is disordered. Over residues Q157–T176 the composition is skewed to polar residues.

Belongs to the FAM177 family.

This is Protein FAM177A1 (Fam177a1) from Mus musculus (Mouse).